The primary structure comprises 640 residues: Chaperone protein HtpG (640 aa).

The segment at 1-343 is a; substrate-binding; the sequence is MQTAENIEHL…SSDLPLNVSR (343 aa). Positions 344–564 are b; that stretch reads EILQESKDID…THDVSGNLGR (221 aa). The segment at 565–640 is c; that stretch reads LLKSAGQKVP…LLLQNILSGK (76 aa).

The protein belongs to the heat shock protein 90 family. In terms of assembly, homodimer.

It localises to the cytoplasm. Functionally, molecular chaperone. Has ATPase activity. In Nitrosomonas europaea (strain ATCC 19718 / CIP 103999 / KCTC 2705 / NBRC 14298), this protein is Chaperone protein HtpG.